A 202-amino-acid chain; its full sequence is Transcription factor IBH1 (202 aa).

Pro residues predominate over residues 1–16 (MDAKRTPPPPTPPNPN). The interval 1–33 (MDAKRTPPPPTPPNPNPSVIGSGAAADGGGFGR) is disordered. A bHLH domain is found at 136-185 (TSAAARAVPPPPRQQGEPPRAEALRRLVPGGAGMEYSSLLEETADYLRSL).

The protein belongs to the bHLH protein family. In terms of assembly, interacts with ILI1. Binds to ILI5/BUL1 and BC1. Interacts with BCL1 and BCL2. In terms of tissue distribution, highly expressed in roots and at lower levels in leaf blades, leaf sheaths, lamina joint, stems and panicles.

In terms of biological role, atypical and probable non DNA-binding bHLH transcription factor that acts as a negative regulator of cell elongation and plant development. Binds the transcription factor ILI1 and forms a heterodimer of antagonistic bHLH transcription factors that function downstream of BZR1 to mediate brassinosteroid regulation of cell elongation and lamina inclination. The sequence is that of Transcription factor IBH1 from Oryza sativa subsp. japonica (Rice).